We begin with the raw amino-acid sequence, 392 residues long: Cell division protein DivIB (392 aa).

The interval 1–88 (MSEKDNNLTP…TQSSEAPIEN (88 aa)) is disordered. Residues 1–131 (MSEKDNNLTP…KGSAPLLKKM (131 aa)) lie on the Cytoplasmic side of the membrane. Basic and acidic residues predominate over residues 14 to 32 (KHLEYQKRKAEEAKKEKKA). The span at 58–76 (TRDEAESAELLEEGFETNN) shows a compositional bias: acidic residues. The helical transmembrane segment at 132–152 (WPALAVVVLVFVGSLYLISPL) threads the bilayer. The region spanning 153 to 224 (SKISTFSVSG…NRFEAIVKEH (72 aa)) is the POTRA domain. Residues 153–392 (SKISTFSVSG…TAQSTTTSSN (240 aa)) lie on the Extracellular side of the membrane. Residues 368 to 392 (ISAQNAKKTDASSENTAQSTTTSSN) form a disordered region.

Belongs to the FtsQ/DivIB family. DivIB subfamily.

The protein resides in the cell membrane. Its function is as follows. Cell division protein that may be involved in stabilizing or promoting the assembly of the division complex. This chain is Cell division protein DivIB, found in Lactococcus lactis subsp. lactis (strain KF147).